Consider the following 167-residue polypeptide: NADH-quinone oxidoreductase subunit B (167 aa).

[4Fe-4S] cluster-binding residues include Cys-40, Cys-41, Cys-105, and Cys-135.

The protein belongs to the complex I 20 kDa subunit family. As to quaternary structure, NDH-1 is composed of 14 different subunits. Subunits NuoB, C, D, E, F, and G constitute the peripheral sector of the complex. Requires [4Fe-4S] cluster as cofactor.

It is found in the cell inner membrane. The catalysed reaction is a quinone + NADH + 5 H(+)(in) = a quinol + NAD(+) + 4 H(+)(out). Its function is as follows. NDH-1 shuttles electrons from NADH, via FMN and iron-sulfur (Fe-S) centers, to quinones in the respiratory chain. The immediate electron acceptor for the enzyme in this species is believed to be ubiquinone. Couples the redox reaction to proton translocation (for every two electrons transferred, four hydrogen ions are translocated across the cytoplasmic membrane), and thus conserves the redox energy in a proton gradient. In Magnetococcus marinus (strain ATCC BAA-1437 / JCM 17883 / MC-1), this protein is NADH-quinone oxidoreductase subunit B.